The primary structure comprises 194 residues: UPF0301 protein FTM_0963 (194 aa).

Belongs to the UPF0301 (AlgH) family.

The sequence is that of UPF0301 protein FTM_0963 from Francisella tularensis subsp. mediasiatica (strain FSC147).